A 141-amino-acid polypeptide reads, in one-letter code: Heavy metal-associated isoprenylated plant protein 29 (141 aa).

An HMA domain is found at 1–59 (MEVPMDCPGCENKVRKALEKMNGVHDVQIDIKQQRVTVTGSAEQKKVLKVARNVTKRDI). A metal cation contacts are provided by cysteine 7 and cysteine 10. Cysteine 138 bears the Cysteine methyl ester mark. Cysteine 138 carries S-farnesyl cysteine lipidation. A propeptide spans 139-141 (SIM) (removed in mature form).

It belongs to the HIPP family.

Functionally, heavy-metal-binding protein. This Arabidopsis thaliana (Mouse-ear cress) protein is Heavy metal-associated isoprenylated plant protein 29.